The sequence spans 315 residues: Fructose-1,6-bisphosphatase class 1 (315 aa).

Residues glutamate 90, aspartate 111, leucine 113, and aspartate 114 each coordinate Mg(2+). Residues 114-117 (DGSS), tyrosine 222, and lysine 253 contribute to the substrate site. Glutamate 259 contributes to the Mg(2+) binding site.

The protein belongs to the FBPase class 1 family. Homotetramer. Mg(2+) serves as cofactor.

The protein resides in the cytoplasm. The enzyme catalyses beta-D-fructose 1,6-bisphosphate + H2O = beta-D-fructose 6-phosphate + phosphate. Its pathway is carbohydrate biosynthesis; gluconeogenesis. The protein is Fructose-1,6-bisphosphatase class 1 of Trichlorobacter lovleyi (strain ATCC BAA-1151 / DSM 17278 / SZ) (Geobacter lovleyi).